The chain runs to 250 residues: DNA repair protein RecO (250 aa).

It belongs to the RecO family.

Functionally, involved in DNA repair and RecF pathway recombination. This chain is DNA repair protein RecO, found in Lactobacillus helveticus (strain DPC 4571).